Here is a 177-residue protein sequence, read N- to C-terminus: Transcriptional repressor NrdR (177 aa).

Residues 3 to 34 (CLFCQHTDTRVIDSRVSEDGATIRRRRECEAC) fold into a zinc finger. Residues 49-139 (PVIIKKDGGR…VYRSFQDVAD (91 aa)) form the ATP-cone domain.

This sequence belongs to the NrdR family. It depends on Zn(2+) as a cofactor.

Negatively regulates transcription of bacterial ribonucleotide reductase nrd genes and operons by binding to NrdR-boxes. The polypeptide is Transcriptional repressor NrdR (Xylella fastidiosa (strain M23)).